A 463-amino-acid chain; its full sequence is Probable transport protein HsrA (463 aa).

A run of 14 helical transmembrane segments spans residues 10–30 (GLAWVAAMALFMQSLDATILN), 49–69 (MAIIAYSLAVALFIPLTAWAA), 82–102 (VFTFILGSVACAAASNLESLI), 107–127 (IQGIGGAFMMPVARLAIIQAV), 139–159 (MATAGLIGPILGPILGGWLVI), 165–185 (WIFLINIPIGALGILASGSVM), 197–217 (WTGFLLFALGLVGITLGLDLL), 225–245 (SVTYSILVVGILLLVTYCGYA), 267–287 (IIANIFIRLSASGVPFLLPLM), 298–318 (MSGWLLAPIALISVMLKILIG), 328–348 (TTLISSALLMAGSVISMAWLD), 354–374 (TWIICNLMWYGACMSIIFTSI), 393–413 (VLSIVQQVGIGFGIAVSSIIL), and 429–449 (AFSYTFLTSSLFVIALVWSLM).

This sequence belongs to the major facilitator superfamily. EmrB family.

The protein localises to the cell inner membrane. This chain is Probable transport protein HsrA (hsrA), found in Haemophilus influenzae (strain ATCC 51907 / DSM 11121 / KW20 / Rd).